A 289-amino-acid polypeptide reads, in one-letter code: Ribosomal RNA small subunit methyltransferase A (289 aa).

Positions 28, 30, 55, 76, 101, and 125 each coordinate S-adenosyl-L-methionine.

Belongs to the class I-like SAM-binding methyltransferase superfamily. rRNA adenine N(6)-methyltransferase family. RsmA subfamily.

The protein resides in the cytoplasm. It catalyses the reaction adenosine(1518)/adenosine(1519) in 16S rRNA + 4 S-adenosyl-L-methionine = N(6)-dimethyladenosine(1518)/N(6)-dimethyladenosine(1519) in 16S rRNA + 4 S-adenosyl-L-homocysteine + 4 H(+). Specifically dimethylates two adjacent adenosines (A1518 and A1519) in the loop of a conserved hairpin near the 3'-end of 16S rRNA in the 30S particle. May play a critical role in biogenesis of 30S subunits. This chain is Ribosomal RNA small subunit methyltransferase A, found in Clostridioides difficile (strain 630) (Peptoclostridium difficile).